We begin with the raw amino-acid sequence, 45 residues long: Large ribosomal subunit protein bL34c (45 aa).

Over residues 1 to 10 the composition is skewed to polar residues; the sequence is MSKGFSNGTN. Residues 1–45 form a disordered region; the sequence is MSKGFSNGTNIKRVRKSGFRARMSNSSGRKILNSRRRKQRKKIAL. Basic residues predominate over residues 32-45; that stretch reads LNSRRRKQRKKIAL.

Belongs to the bacterial ribosomal protein bL34 family.

The protein localises to the plastid. The protein resides in the chloroplast. In Gracilaria tenuistipitata var. liui (Red alga), this protein is Large ribosomal subunit protein bL34c.